Here is a 287-residue protein sequence, read N- to C-terminus: Movement protein BC1 (287 aa).

This sequence belongs to the begomovirus movement protein BC1 family. Binds to dimeric supercoiled plasmid DNA. In terms of processing, phosphorylated.

The protein localises to the host cell membrane. The protein resides in the host microsome membrane. It localises to the host endoplasmic reticulum membrane. Its function is as follows. Transports viral genome to neighboring plant cells directly through plasmosdesmata, without any budding. The movement protein allows efficient cell to cell propagation, by bypassing the host cell wall barrier. Begomovirus genome is shuttled out of nucleus by Nuclear shuttle protein (NSP) and the movement protein transports the DNA-NSP complex to cell plasmodesmata and facilitates further movement across the cell wall. This chain is Movement protein BC1, found in Manihot esculenta (Cassava).